Here is a 204-residue protein sequence, read N- to C-terminus: MPKVGLFNKEGQQVGDIQLNEQVFGVEVNKYALHQVVVAQLANKRQGTQSAKTRSEVRGGGIKPWRQKGTGRARQGSIRAPQWIKGGVVFAPKPRDYRMSIPKSMRKVAMTSALTSKVADMVVLEDLTFEAPKTKEAVKMLNAFEAKKTLIITAEVNENVYKSARNIRGVTVMPVNNINVYDLLNCKTLMITKEAVNKIEEVYA.

A disordered region spans residues 44–76; sequence KRQGTQSAKTRSEVRGGGIKPWRQKGTGRARQG.

The protein belongs to the universal ribosomal protein uL4 family. In terms of assembly, part of the 50S ribosomal subunit.

One of the primary rRNA binding proteins, this protein initially binds near the 5'-end of the 23S rRNA. It is important during the early stages of 50S assembly. It makes multiple contacts with different domains of the 23S rRNA in the assembled 50S subunit and ribosome. Its function is as follows. Forms part of the polypeptide exit tunnel. In Clostridium perfringens (strain 13 / Type A), this protein is Large ribosomal subunit protein uL4.